Reading from the N-terminus, the 469-residue chain is 3-isopropylmalate dehydratase large subunit (469 aa).

[4Fe-4S] cluster is bound by residues cysteine 347, cysteine 408, and cysteine 411.

This sequence belongs to the aconitase/IPM isomerase family. LeuC type 1 subfamily. Heterodimer of LeuC and LeuD. [4Fe-4S] cluster is required as a cofactor.

It carries out the reaction (2R,3S)-3-isopropylmalate = (2S)-2-isopropylmalate. It participates in amino-acid biosynthesis; L-leucine biosynthesis; L-leucine from 3-methyl-2-oxobutanoate: step 2/4. Functionally, catalyzes the isomerization between 2-isopropylmalate and 3-isopropylmalate, via the formation of 2-isopropylmaleate. The sequence is that of 3-isopropylmalate dehydratase large subunit from Actinobacillus pleuropneumoniae serotype 7 (strain AP76).